Here is a 1392-residue protein sequence, read N- to C-terminus: DNA-directed RNA polymerase subunit beta (1392 aa).

This sequence belongs to the RNA polymerase beta chain family. The RNAP catalytic core consists of 2 alpha, 1 beta, 1 beta' and 1 omega subunit. When a sigma factor is associated with the core the holoenzyme is formed, which can initiate transcription.

It catalyses the reaction RNA(n) + a ribonucleoside 5'-triphosphate = RNA(n+1) + diphosphate. Its function is as follows. DNA-dependent RNA polymerase catalyzes the transcription of DNA into RNA using the four ribonucleoside triphosphates as substrates. The protein is DNA-directed RNA polymerase subunit beta of Neisseria meningitidis serogroup A / serotype 4A (strain DSM 15465 / Z2491).